A 104-amino-acid polypeptide reads, in one-letter code: Large ribosomal subunit protein uL24 (104 aa).

This sequence belongs to the universal ribosomal protein uL24 family. As to quaternary structure, part of the 50S ribosomal subunit.

One of two assembly initiator proteins, it binds directly to the 5'-end of the 23S rRNA, where it nucleates assembly of the 50S subunit. Its function is as follows. One of the proteins that surrounds the polypeptide exit tunnel on the outside of the subunit. The chain is Large ribosomal subunit protein uL24 from Enterobacter sp. (strain 638).